The primary structure comprises 286 residues: MGKKRKQTIKNDYNEKITKRKVKNNLTDGKARALTVFESLPLEVLRLIFLLSNNSNLAVTSRSLRHRLSLRNNTPIFMPIDFTLSMVPKSIILSIQRGLLRRYFTLQILTKIDELVISGFVKKSPNEDIKDGRVIHAGHEGFIPKRILFLPNAEDFIAELEHRNFLFKASSLRNGFLLALKQRNIPVIRQVGKIVTERLISIPDDEVEFCFLTWFEYTMEQNSVELLDIVFGFWNNIIEKRFSKSFIDSYLTRLVDIAISKNVTEIMYYLIEKGAIPQLPNLLKLF.

This is an uncharacterized protein from Schizosaccharomyces pombe (strain 972 / ATCC 24843) (Fission yeast).